The primary structure comprises 259 residues: Deoxyribose-phosphate aldolase (259 aa).

Asp-102 serves as the catalytic Proton donor/acceptor. Catalysis depends on Lys-166, which acts as the Schiff-base intermediate with acetaldehyde. Lys-200 acts as the Proton donor/acceptor in catalysis.

The protein belongs to the DeoC/FbaB aldolase family. DeoC type 2 subfamily.

The protein resides in the cytoplasm. The enzyme catalyses 2-deoxy-D-ribose 5-phosphate = D-glyceraldehyde 3-phosphate + acetaldehyde. It functions in the pathway carbohydrate degradation; 2-deoxy-D-ribose 1-phosphate degradation; D-glyceraldehyde 3-phosphate and acetaldehyde from 2-deoxy-alpha-D-ribose 1-phosphate: step 2/2. In terms of biological role, catalyzes a reversible aldol reaction between acetaldehyde and D-glyceraldehyde 3-phosphate to generate 2-deoxy-D-ribose 5-phosphate. The sequence is that of Deoxyribose-phosphate aldolase from Vibrio cholerae serotype O1 (strain ATCC 39315 / El Tor Inaba N16961).